Here is a 356-residue protein sequence, read N- to C-terminus: MKRELLLEKIEEYKSLMPWFVLEYYQSKLSVPYSFTTLYEYLKEYKRFFNWLIDSGISDADDIASIHIKTLENLTKKDMESFVLYLRERPSLNTYSKKQGVSQTTINRTLSALSCLYKYLTEEVEGPDGEPYFYRNVMKKISTKKKKETLAARAENIKQKLFLGDETMKFLDYVENEYEVKLSNRAKSSFYKNKERDLAIIALLLSSGVRLSEAVNLDLKDINLKRMVIDVTRKGGQRDSVNMASFARPYLENYLSIRNKRYKAEKQDVALFLTEYRGVPNRIDASSIEKMVAKYSQDFKIRVTPHKLRHTLATRLYDATKSQVLVSHQLGHASTQVTDLYTHIVNDEQKNALDNL.

Residues L16 to T121 form the Core-binding (CB) domain. A Tyr recombinase domain is found at K169–D354. Catalysis depends on residues R210, K234, H306, R309, and H332. The active-site O-(3'-phospho-DNA)-tyrosine intermediate is Y341.

This sequence belongs to the 'phage' integrase family. XerS subfamily.

It is found in the cytoplasm. Its activity is regulated as follows. FtsK is required for recombination. In terms of biological role, site-specific tyrosine recombinase, which acts by catalyzing the cutting and rejoining of the recombining DNA molecules. Essential to convert dimers of the bacterial chromosome into monomers to permit their segregation at cell division. This is Tyrosine recombinase XerS from Streptococcus thermophilus (strain ATCC BAA-250 / LMG 18311).